The chain runs to 451 residues: Chromosomal replication initiator protein DnaA (451 aa).

The domain I, interacts with DnaA modulators stretch occupies residues 1–73; that stretch reads MQDNLPQIWE…SNALKQTTSK (73 aa). A domain II region spans residues 73–113; the sequence is KNFEIRFIVPSEEKISKTEESQKKLEGSVNISVASDQFVSN. The tract at residues 114–330 is domain III, AAA+ region; that stretch reads NLNPKYTFDT…GALIRIVAYS (217 aa). The ATP site is built by Gly158, Gly160, Lys161, and Thr162. Residues 331 to 451 are domain IV, binds dsDNA; it reads SLTNSEITVE…ERIAKEIKGD (121 aa).

It belongs to the DnaA family. Oligomerizes as a right-handed, spiral filament on DNA at oriC.

The protein resides in the cytoplasm. Its function is as follows. Plays an essential role in the initiation and regulation of chromosomal replication. ATP-DnaA binds to the origin of replication (oriC) to initiate formation of the DNA replication initiation complex once per cell cycle. Binds the DnaA box (a 9 base pair repeat at the origin) and separates the double-stranded (ds)DNA. Forms a right-handed helical filament on oriC DNA; dsDNA binds to the exterior of the filament while single-stranded (ss)DNA is stabiized in the filament's interior. The ATP-DnaA-oriC complex binds and stabilizes one strand of the AT-rich DNA unwinding element (DUE), permitting loading of DNA polymerase. After initiation quickly degrades to an ADP-DnaA complex that is not apt for DNA replication. Binds acidic phospholipids. In Alkaliphilus oremlandii (strain OhILAs) (Clostridium oremlandii (strain OhILAs)), this protein is Chromosomal replication initiator protein DnaA.